Here is a 206-residue protein sequence, read N- to C-terminus: Large ribosomal subunit protein uL4 (206 aa).

Positions 44-87 are disordered; sequence KRQGTHATKTRGMKRGGGAKPWRQKGTGRARAGSTRSPLWRGGG.

It belongs to the universal ribosomal protein uL4 family. As to quaternary structure, part of the 50S ribosomal subunit.

One of the primary rRNA binding proteins, this protein initially binds near the 5'-end of the 23S rRNA. It is important during the early stages of 50S assembly. It makes multiple contacts with different domains of the 23S rRNA in the assembled 50S subunit and ribosome. Its function is as follows. Forms part of the polypeptide exit tunnel. The sequence is that of Large ribosomal subunit protein uL4 from Maridesulfovibrio salexigens (strain ATCC 14822 / DSM 2638 / NCIMB 8403 / VKM B-1763) (Desulfovibrio salexigens).